The following is a 283-amino-acid chain: Pantothenate synthetase (283 aa).

Residue 30 to 37 (MGNLHLGH) coordinates ATP. His-37 (proton donor) is an active-site residue. Gln-61 contributes to the (R)-pantoate binding site. Gln-61 provides a ligand contact to beta-alanine. 149–152 (GQKD) is an ATP binding site. Gln-155 is a (R)-pantoate binding site. ATP is bound by residues Ile-178 and 186–189 (MSSR).

The protein belongs to the pantothenate synthetase family. Homodimer.

The protein resides in the cytoplasm. It catalyses the reaction (R)-pantoate + beta-alanine + ATP = (R)-pantothenate + AMP + diphosphate + H(+). Its pathway is cofactor biosynthesis; (R)-pantothenate biosynthesis; (R)-pantothenate from (R)-pantoate and beta-alanine: step 1/1. Functionally, catalyzes the condensation of pantoate with beta-alanine in an ATP-dependent reaction via a pantoyl-adenylate intermediate. This is Pantothenate synthetase from Shewanella pealeana (strain ATCC 700345 / ANG-SQ1).